The primary structure comprises 656 residues: PAN2-PAN3 deadenylation complex subunit pan3 (656 aa).

2 disordered regions span residues 1–24 (MAAT…KNRD) and 75–117 (SFTP…QQAN). The segment at 24 to 53 (DTKETLCRNVVIYGHCRWEDSGCTFNHDQN) adopts a C3H1-type zinc-finger fold. Positions 63 to 83 (NSNRRVFNVESPSFTPANQQQ) match the PABPC-interacting motif-2 (PAM-2) motif. Composition is skewed to polar residues over residues 75–96 (SFTP…SQAA) and 107–117 (GTSTPTLQQAN). Positions 251–514 (QLLPNSGLPN…TVETLLGGIT (264 aa)) are pseudokinase domain. Residues 275 to 280 (TRNSTC), R302, 352 to 359 (DFHPLSET), and 412 to 413 (SK) each bind ATP. A coiled-coil region spans residues 515 to 553 (THLANFANFVMQESDEKEFHLMRELENGRIARLMFKLSV). Residues 554 to 656 (VNERGDSCGV…SKPSATGATI (103 aa)) are knob domain.

The protein belongs to the protein kinase superfamily. PAN3 family. In terms of assembly, homodimer. Forms a heterotrimer with a catalytic subunit par-1/pan2 to form the poly(A)-nuclease (PAN) deadenylation complex. Interacts (via PAM-2 motif) with poly(A)-binding protein pabp-1 (via PABC domain), conferring substrate specificity of the enzyme complex.

It is found in the cytoplasm. Functionally, regulatory subunit of the poly(A)-nuclease (PAN) deadenylation complex, one of two cytoplasmic mRNA deadenylases involved in mRNA turnover. PAN specifically shortens poly(A) tails of RNA and the activity is stimulated by poly(A)-binding protein pabp-1. PAN deadenylation is followed by rapid degradation of the shortened mRNA tails by the CCR4-NOT complex. Deadenylated mRNAs are then degraded by two alternative mechanisms, namely exosome-mediated 3'-5' exonucleolytic degradation, or deadenylation-dependent mRNA decaping and subsequent 5'-3' exonucleolytic degradation by rgb-30/xrn1. May also be involved in post-transcriptional maturation of mRNA poly(A) tails. par-2/pan3 acts as a positive regulator for PAN activity, recruiting the catalytic subunit par-1/pan2 to mRNA via its interaction with RNA and with pabp-1. This Neurospora crassa (strain ATCC 24698 / 74-OR23-1A / CBS 708.71 / DSM 1257 / FGSC 987) protein is PAN2-PAN3 deadenylation complex subunit pan3 (par-2).